Reading from the N-terminus, the 228-residue chain is L-ribulose-5-phosphate 4-epimerase UlaF (228 aa).

Residues 26 to 27, 43 to 44, and 72 to 73 contribute to the substrate site; these read GN, SG, and SS. Zn(2+)-binding residues include Asp74, His93, and His95. The active-site Proton donor/acceptor is Asp118. Zn(2+) is bound at residue His167. The Proton donor/acceptor role is filled by Tyr225.

It belongs to the aldolase class II family. AraD/FucA subfamily. Requires Zn(2+) as cofactor.

The enzyme catalyses L-ribulose 5-phosphate = D-xylulose 5-phosphate. The protein operates within cofactor degradation; L-ascorbate degradation; D-xylulose 5-phosphate from L-ascorbate: step 4/4. Functionally, catalyzes the isomerization of L-ribulose 5-phosphate to D-xylulose 5-phosphate. Is involved in the anaerobic L-ascorbate utilization. This is L-ribulose-5-phosphate 4-epimerase UlaF from Escherichia coli (strain ATCC 8739 / DSM 1576 / NBRC 3972 / NCIMB 8545 / WDCM 00012 / Crooks).